A 71-amino-acid chain; its full sequence is MSYYRKRLSPISPSQPIDYKDTELLRKFITERGKILPRRITGLTSKQQRDLTEAVKRARLMALLPFVNQEA.

It belongs to the bacterial ribosomal protein bS18 family. Part of the 30S ribosomal subunit. Forms a tight heterodimer with protein bS6.

Its function is as follows. Binds as a heterodimer with protein bS6 to the central domain of the 16S rRNA, where it helps stabilize the platform of the 30S subunit. The sequence is that of Small ribosomal subunit protein bS18 from Microcystis aeruginosa (strain NIES-843 / IAM M-2473).